The chain runs to 700 residues: Elongation factor G (700 aa).

Residues 10–286 (NKVRNIGIMA…AVIDYLPNPL (277 aa)) form the tr-type G domain. GTP contacts are provided by residues 19–26 (AHIDAGKT), 83–87 (DTPGH), and 137–140 (NKMD).

Belongs to the TRAFAC class translation factor GTPase superfamily. Classic translation factor GTPase family. EF-G/EF-2 subfamily.

It is found in the cytoplasm. Its function is as follows. Catalyzes the GTP-dependent ribosomal translocation step during translation elongation. During this step, the ribosome changes from the pre-translocational (PRE) to the post-translocational (POST) state as the newly formed A-site-bound peptidyl-tRNA and P-site-bound deacylated tRNA move to the P and E sites, respectively. Catalyzes the coordinated movement of the two tRNA molecules, the mRNA and conformational changes in the ribosome. This chain is Elongation factor G, found in Rhodococcus opacus (strain B4).